The following is a 230-amino-acid chain: Large ribosomal subunit protein uL1 (230 aa).

The protein belongs to the universal ribosomal protein uL1 family. Part of the 50S ribosomal subunit.

Binds directly to 23S rRNA. The L1 stalk is quite mobile in the ribosome, and is involved in E site tRNA release. In terms of biological role, protein L1 is also a translational repressor protein, it controls the translation of the L11 operon by binding to its mRNA. The polypeptide is Large ribosomal subunit protein uL1 (Rhodopseudomonas palustris (strain BisA53)).